The chain runs to 269 residues: Hydroxyethylthiazole kinase (269 aa).

A substrate-binding site is contributed by methionine 41. ATP contacts are provided by arginine 117 and serine 163. Position 190 (glycine 190) interacts with substrate.

This sequence belongs to the Thz kinase family. Requires Mg(2+) as cofactor.

It carries out the reaction 5-(2-hydroxyethyl)-4-methylthiazole + ATP = 4-methyl-5-(2-phosphooxyethyl)-thiazole + ADP + H(+). It functions in the pathway cofactor biosynthesis; thiamine diphosphate biosynthesis; 4-methyl-5-(2-phosphoethyl)-thiazole from 5-(2-hydroxyethyl)-4-methylthiazole: step 1/1. Catalyzes the phosphorylation of the hydroxyl group of 4-methyl-5-beta-hydroxyethylthiazole (THZ). In Latilactobacillus sakei subsp. sakei (strain 23K) (Lactobacillus sakei subsp. sakei), this protein is Hydroxyethylthiazole kinase.